We begin with the raw amino-acid sequence, 288 residues long: Alpha/beta hydrolase domain-containing protein 17B (288 aa).

Active-site charge relay system residues include serine 170, aspartate 235, and histidine 264.

This sequence belongs to the AB hydrolase superfamily. ABHD17 family. Palmitoylated on cysteine residues located in a cysteine cluster at the N-terminus which promotes membrane localization.

The protein localises to the cell membrane. It is found in the recycling endosome membrane. The protein resides in the cell projection. It localises to the dendritic spine. Its subcellular location is the postsynaptic density membrane. It catalyses the reaction S-hexadecanoyl-L-cysteinyl-[protein] + H2O = L-cysteinyl-[protein] + hexadecanoate + H(+). Its function is as follows. Hydrolyzes fatty acids from S-acylated cysteine residues in proteins. The chain is Alpha/beta hydrolase domain-containing protein 17B from Xenopus tropicalis (Western clawed frog).